A 331-amino-acid polypeptide reads, in one-letter code: UPF0194 membrane protein YbhG (331 aa).

Residues 1–19 form the signal peptide; the sequence is MKKPVVIGLAIAAIVAVIA. Residues 107-208 adopt a coiled-coil conformation; the sequence is EEIAQAAAAV…LDLQDTTLIA (102 aa).

Belongs to the UPF0194 family.

The protein localises to the periplasm. The protein is UPF0194 membrane protein YbhG of Salmonella heidelberg (strain SL476).